The following is a 370-amino-acid chain: Protein FAM110B (370 aa).

Disordered stretches follow at residues 127-151 (SSEG…RSEA) and 237-256 (KSPE…RPSL). Phosphoserine occurs at positions 238 and 301. Positions 317-337 (DCEQSQDSNSDLRNDDSANDR) are disordered. The segment covering 326–335 (SDLRNDDSAN) has biased composition (basic and acidic residues).

Belongs to the FAM110 family. Detected in thyroid, spleen and testis, and at lower levels in stomach, spinal cord, lymph node, trachea, adrenal gland, prostate, ovary and intestine.

Its subcellular location is the cytoplasm. It localises to the cytoskeleton. The protein resides in the microtubule organizing center. The protein localises to the centrosome. Functionally, may be involved in tumor progression. The protein is Protein FAM110B (FAM110B) of Homo sapiens (Human).